We begin with the raw amino-acid sequence, 534 residues long: Peptide chain release factor 3 (534 aa).

One can recognise a tr-type G domain in the interval 9-278 (ARRRTFAIIS…FFVEHAPPPQ (270 aa)). Residues 18–25 (SHPDAGKT), 86–90 (DTPGH), and 140–143 (NKLD) each bind GTP.

Belongs to the TRAFAC class translation factor GTPase superfamily. Classic translation factor GTPase family. PrfC subfamily.

It is found in the cytoplasm. In terms of biological role, increases the formation of ribosomal termination complexes and stimulates activities of RF-1 and RF-2. It binds guanine nucleotides and has strong preference for UGA stop codons. It may interact directly with the ribosome. The stimulation of RF-1 and RF-2 is significantly reduced by GTP and GDP, but not by GMP. The chain is Peptide chain release factor 3 from Xanthomonas euvesicatoria pv. vesicatoria (strain 85-10) (Xanthomonas campestris pv. vesicatoria).